The following is a 669-amino-acid chain: DNA ligase 2 (669 aa).

NAD(+) is bound by residues 35–39 (DKEYD) and 83–84 (SL). Lysine 125 functions as the N6-AMP-lysine intermediate in the catalytic mechanism. Arginine 147, glutamate 181, and lysine 317 together coordinate NAD(+). Positions 410, 413, 426, and 432 each coordinate Zn(2+). In terms of domain architecture, BRCT spans 590 to 669 (VVENAFTGKT…EEFEQLINNM (80 aa)).

It belongs to the NAD-dependent DNA ligase family. LigA subfamily. It depends on Mg(2+) as a cofactor. Requires Mn(2+) as cofactor.

The catalysed reaction is NAD(+) + (deoxyribonucleotide)n-3'-hydroxyl + 5'-phospho-(deoxyribonucleotide)m = (deoxyribonucleotide)n+m + AMP + beta-nicotinamide D-nucleotide.. In terms of biological role, DNA ligase that catalyzes the formation of phosphodiester linkages between 5'-phosphoryl and 3'-hydroxyl groups in double-stranded DNA using NAD as a coenzyme and as the energy source for the reaction. It is essential for DNA replication and repair of damaged DNA. The chain is DNA ligase 2 from Clostridium acetobutylicum (strain ATCC 824 / DSM 792 / JCM 1419 / IAM 19013 / LMG 5710 / NBRC 13948 / NRRL B-527 / VKM B-1787 / 2291 / W).